Reading from the N-terminus, the 215-residue chain is Glycerol-3-phosphate acyltransferase (215 aa).

6 helical membrane-spanning segments follow: residues 3–23 (LILL…LWIG), 42–61 (TNTF…LIDI), 68–90 (TLLP…FAVL), 110–130 (AGVL…VFVL), 134–154 (LFSM…ISVL), and 162–182 (LLPS…AIII).

It belongs to the PlsY family. Probably interacts with PlsX.

It localises to the cell membrane. The enzyme catalyses an acyl phosphate + sn-glycerol 3-phosphate = a 1-acyl-sn-glycero-3-phosphate + phosphate. Its pathway is lipid metabolism; phospholipid metabolism. Its function is as follows. Catalyzes the transfer of an acyl group from acyl-phosphate (acyl-PO(4)) to glycerol-3-phosphate (G3P) to form lysophosphatidic acid (LPA). This enzyme utilizes acyl-phosphate as fatty acyl donor, but not acyl-CoA or acyl-ACP. The protein is Glycerol-3-phosphate acyltransferase of Streptococcus equi subsp. equi (strain 4047).